Here is a 362-residue protein sequence, read N- to C-terminus: Histidine protein methyltransferase 1 homolog (362 aa).

The interval K28–P89 is disordered. Residues S55–D73 show a composition bias toward polar residues. 2 positions are modified to phosphoserine: S62 and S67. H144 carries the post-translational modification Tele-methylhistidine. S-adenosyl-L-methionine is bound by residues I158–T162, G185, and Q206–Y208. A Nuclear localization signal motif is present at residues P237 to R243. Residues G259–W261 and S283 contribute to the S-adenosyl-L-methionine site.

This sequence belongs to the methyltransferase superfamily. METTL18 family. Interacts with GRWD1 and members of the heat shock protein 90 and 70 families; these proteins may possibly be methylation substrates for the enzyme. Post-translationally, monomethylated at His-144 through automethylation. Automethylation at His-144 positively regulates the methyltransferase activity toward RPL3. Probably methylated on other residues.

Its subcellular location is the cytoplasm. The protein localises to the cytosol. It is found in the nucleus. The protein resides in the nucleolus. The catalysed reaction is L-histidyl-[protein] + S-adenosyl-L-methionine = N(tele)-methyl-L-histidyl-[protein] + S-adenosyl-L-homocysteine + H(+). Functionally, protein-L-histidine N-tele-methyltransferase that specifically monomethylates RPL3, thereby regulating translation elongation. Histidine methylation of RPL3 regulates translation elongation by slowing ribosome traversal on tyrosine codons: slower elongation provides enough time for proper folding of synthesized proteins and prevents cellular aggregation of tyrosine-rich proteins. In Rattus norvegicus (Rat), this protein is Histidine protein methyltransferase 1 homolog.